A 166-amino-acid chain; its full sequence is 2-amino-4-hydroxy-6-hydroxymethyldihydropteridine pyrophosphokinase (166 aa).

It belongs to the HPPK family.

It catalyses the reaction 6-hydroxymethyl-7,8-dihydropterin + ATP = (7,8-dihydropterin-6-yl)methyl diphosphate + AMP + H(+). The protein operates within cofactor biosynthesis; tetrahydrofolate biosynthesis; 2-amino-4-hydroxy-6-hydroxymethyl-7,8-dihydropteridine diphosphate from 7,8-dihydroneopterin triphosphate: step 4/4. Catalyzes the transfer of pyrophosphate from adenosine triphosphate (ATP) to 6-hydroxymethyl-7,8-dihydropterin, an enzymatic step in folate biosynthesis pathway. This is 2-amino-4-hydroxy-6-hydroxymethyldihydropteridine pyrophosphokinase (folK) from Streptococcus pyogenes serotype M18 (strain MGAS8232).